The primary structure comprises 676 residues: Ribosome quality control complex subunit TCF25 (676 aa).

Disordered regions lie at residues 1-59 and 85-147; these read MSRR…VRVN and LTDA…ENGL. Residues 123–136 are compositionally biased toward basic residues; the sequence is GKLRKKKKKQKNKK. The residue at position 602 (S602) is a Phosphoserine.

This sequence belongs to the TCF25 family. As to quaternary structure, component of the ribosome quality control complex (RQC), composed of the E3 ubiquitin ligase LTN1, TCF25 and NEMF associated with the 60S ribosomal subunit. Interacts (via C-terminus) with NFATC4; the interaction leads to suppresson of NFATC4 transcription factor activity and is reduced following stimulation with angiotensin-2. Interacts with XIAP. As to expression, in the embryo, widely expressed with highest levels in brain. In the adult, highest expression is found in the heart. Repressed in cardiac tissue of patients with heart failure (at protein level). mRNA levels in the heart are unchanged in patients with heart failure.

It is found in the nucleus. The protein resides in the cytoplasm. Its subcellular location is the cytosol. In terms of biological role, component of the ribosome quality control complex (RQC), a ribosome-associated complex that mediates ubiquitination and extraction of incompletely synthesized nascent chains for proteasomal degradation. In the RQC complex, required to promote formation of 'Lys-48'-linked polyubiquitin chains during ubiquitination of incompletely synthesized proteins by LTN1. May negatively regulate the calcineurin-NFAT signaling cascade by suppressing the activity of transcription factor NFATC4. May play a role in cell death control. This Homo sapiens (Human) protein is Ribosome quality control complex subunit TCF25.